A 297-amino-acid polypeptide reads, in one-letter code: UDP-N-acetylenolpyruvoylglucosamine reductase (297 aa).

Positions 22-195 (RVGGPAQYYA…LAGRFRLHRA (174 aa)) constitute an FAD-binding PCMH-type domain. Residue Arg-169 is part of the active site. Ser-223 serves as the catalytic Proton donor. Glu-293 is an active-site residue.

Belongs to the MurB family. FAD is required as a cofactor.

It is found in the cytoplasm. It carries out the reaction UDP-N-acetyl-alpha-D-muramate + NADP(+) = UDP-N-acetyl-3-O-(1-carboxyvinyl)-alpha-D-glucosamine + NADPH + H(+). It participates in cell wall biogenesis; peptidoglycan biosynthesis. Cell wall formation. This chain is UDP-N-acetylenolpyruvoylglucosamine reductase, found in Chloroflexus aggregans (strain MD-66 / DSM 9485).